The following is a 325-amino-acid chain: Cytochrome f (325 aa).

The signal sequence occupies residues 1-40 (MSKINLSTMWSSFIKKIAKTILVAIACISLFLTSSPAANA). Residues Tyr41, Cys62, Cys65, and His66 each contribute to the heme site. Residues 291–311 (VKWLMAFFALVMLAQIMLVLK) traverse the membrane as a helical segment.

Belongs to the cytochrome f family. The 4 large subunits of the cytochrome b6-f complex are cytochrome b6, subunit IV (17 kDa polypeptide, PetD), cytochrome f and the Rieske protein, while the 4 small subunits are PetG, PetL, PetM and PetN. The complex functions as a dimer. Heme is required as a cofactor.

The protein resides in the cellular thylakoid membrane. Functionally, component of the cytochrome b6-f complex, which mediates electron transfer between photosystem II (PSII) and photosystem I (PSI), cyclic electron flow around PSI, and state transitions. In Trichodesmium erythraeum (strain IMS101), this protein is Cytochrome f.